A 181-amino-acid polypeptide reads, in one-letter code: 3-isopropylmalate dehydratase small subunit (181 aa).

It belongs to the LeuD family. LeuD type 2 subfamily. In terms of assembly, heterodimer of LeuC and LeuD.

The catalysed reaction is (2R,3S)-3-isopropylmalate = (2S)-2-isopropylmalate. It participates in amino-acid biosynthesis; L-leucine biosynthesis; L-leucine from 3-methyl-2-oxobutanoate: step 2/4. Catalyzes the isomerization between 2-isopropylmalate and 3-isopropylmalate, via the formation of 2-isopropylmaleate. The polypeptide is 3-isopropylmalate dehydratase small subunit (Deinococcus deserti (strain DSM 17065 / CIP 109153 / LMG 22923 / VCD115)).